Consider the following 693-residue polypeptide: Endoprotease bli (693 aa).

The N-terminal stretch at 1-20 is a signal peptide; that stretch reads MYWQLVRILVLFDCLQKILA. A propeptide spans 21-116 (inhibition peptide); it reads IEHDSICIAD…EQRPRVRRKR (96 aa). Aspartate 161 provides a ligand contact to Ca(2+). In terms of domain architecture, Peptidase S8 spans 167-482; that stretch reads QWYLNNGAQG…YGLMDAGALV (316 aa). Asparagine 194 carries an N-linked (GlcNAc...) asparagine glycan. Catalysis depends on aspartate 201, which acts as the Charge relay system. A substrate-binding site is contributed by aspartate 202. Positions 210, 222, 227, and 229 each coordinate Ca(2+). The disordered stretch occupies residues 215 to 242; sequence YDPLASTDINGHDDDPTPQDDGDNKHGT. 237–238 serves as a coordination point for substrate; that stretch reads DN. The active-site Charge relay system is the histidine 240. Residues isoleucine 251, asparagine 254, tyrosine 256, and glycine 258 each contribute to the Ca(2+) site. Intrachain disulfides connect cysteine 257–cysteine 406 and cysteine 349–cysteine 379. Residues glutamate 282, 299–304, aspartate 310, and 338–341 contribute to the substrate site; these read SWGPED and ASGN. Aspartate 304 contacts Ca(2+). Ca(2+) is bound at residue aspartate 347. The substrate site is built by aspartate 352 and tyrosine 354. Residue glutamate 377 coordinates Ca(2+). Serine 414 (charge relay system) is an active-site residue. Residue serine 414 participates in substrate binding. N-linked (GlcNAc...) asparagine glycans are attached at residues asparagine 433 and asparagine 518. The region spanning 490-628 is the P/Homo B domain; it reads TVPEQHICTY…SLLLYGTAEP (139 aa). Residues cysteine 497 and cysteine 526 are joined by a disulfide bond. The segment at 629-693 is disordered; sequence AQPNDPRHSS…LVSAQPELRV (65 aa). A compositionally biased stretch (basic and acidic residues) spans 668–681; sequence DSRDWQPKKVENKK.

This sequence belongs to the peptidase S8 family. Furin subfamily. It depends on Ca(2+) as a cofactor. In terms of processing, N-glycosylated. The inhibition peptide, which plays the role of an intramolecular chaperone, is probably autocatalytically removed in the endoplasmic reticulum (ER) and remains non-covalently bound as a potent autoinhibitor. Probably following transport to the trans Golgi, a second cleavage within the inhibition propeptide results in propeptide dissociation and bli activation.

It localises to the secreted. It catalyses the reaction Release of mature proteins from their proproteins by cleavage of -Arg-Xaa-Yaa-Arg-|-Zaa- bonds, where Xaa can be any amino acid and Yaa is Arg or Lys. Releases albumin, complement component C3 and von Willebrand factor from their respective precursors.. Inhibited by the propeptide before the second cleavage. Inhibited by ethylenediaminetetraacetic acid (EDTA), ZnSO(4) and chloroketone DEC-RVKR-CMK. In terms of biological role, serine endoprotease which cleaves substrates at the RX(K/R)R consensus motif. This is Endoprotease bli from Onchocerca volvulus.